Here is a 510-residue protein sequence, read N- to C-terminus: Polyamine aminopropyltransferase 2 (510 aa).

The next 6 helical transmembrane spans lie at 6–26 (ALLV…ELIA), 38–58 (ILQF…GSWV), 74–94 (LELL…LLFA), 102–122 (LVLY…IPLV), 140–160 (VLTF…LVLA), and 165–185 (LVRT…WTLW). The 245-residue stretch at 205–449 (AGMVGAALLA…GEWGFILAAP (245 aa)) folds into the PABS domain. The spermidine synthase stretch occupies residues 207-456 (MVGAALLAGF…AAPGRADFRP (250 aa)). Residue Gln-244 participates in S-methyl-5'-thioadenosine binding. 2 residues coordinate spermidine: His-274 and Asp-298. Residues Asp-318 and 352–353 (DA) contribute to the S-methyl-5'-thioadenosine site. Catalysis depends on Asp-370, which acts as the Proton acceptor.

The protein belongs to the spermidine/spermine synthase family. As to quaternary structure, homodimer or homotetramer.

It localises to the cell membrane. It catalyses the reaction S-adenosyl 3-(methylsulfanyl)propylamine + putrescine = S-methyl-5'-thioadenosine + spermidine + H(+). It participates in amine and polyamine biosynthesis; spermidine biosynthesis; spermidine from putrescine: step 1/1. Its function is as follows. Catalyzes the irreversible transfer of a propylamine group from the amino donor S-adenosylmethioninamine (decarboxy-AdoMet) to putrescine (1,4-diaminobutane) to yield spermidine. This chain is Polyamine aminopropyltransferase 2, found in Ralstonia nicotianae (strain ATCC BAA-1114 / GMI1000) (Ralstonia solanacearum).